The following is a 216-amino-acid chain: Histidine biosynthesis bifunctional protein HisIE (216 aa).

Residues 1–127 (MSFIDSLSPQ…GKIVAPPGDT (127 aa)) are phosphoribosyl-AMP cyclohydrolase. The tract at residues 128–216 (LSQVFQVICD…VYRKLQERRR (89 aa)) is phosphoribosyl-ATP pyrophosphohydrolase.

It in the N-terminal section; belongs to the PRA-CH family. In the C-terminal section; belongs to the PRA-PH family.

It is found in the cytoplasm. The catalysed reaction is 1-(5-phospho-beta-D-ribosyl)-ATP + H2O = 1-(5-phospho-beta-D-ribosyl)-5'-AMP + diphosphate + H(+). It carries out the reaction 1-(5-phospho-beta-D-ribosyl)-5'-AMP + H2O = 1-(5-phospho-beta-D-ribosyl)-5-[(5-phospho-beta-D-ribosylamino)methylideneamino]imidazole-4-carboxamide. Its pathway is amino-acid biosynthesis; L-histidine biosynthesis; L-histidine from 5-phospho-alpha-D-ribose 1-diphosphate: step 2/9. The protein operates within amino-acid biosynthesis; L-histidine biosynthesis; L-histidine from 5-phospho-alpha-D-ribose 1-diphosphate: step 3/9. The chain is Histidine biosynthesis bifunctional protein HisIE (hisI) from Nostoc sp. (strain PCC 7120 / SAG 25.82 / UTEX 2576).